A 309-amino-acid polypeptide reads, in one-letter code: MMSFLHIVFSILVVVAFILGNFANGFIALINFIAWVKRQKISSADQIIAALAVSRVGLLWVILLHWYSTVLNPTSSNLKVIIFISNAWAVTNHFSIWLATSLSIFYLLKIVNFSRLIFHHLKRKAKSVVLVIVLGSLFFLVCXLVMKNTYINVWTEECEGNVTWKIKLRNAMHLSNLTVAMLANLIPFTLTLISFLLLIYSLCKHLKKMQLHGKGSQDPSTKIHIKALQTVTSFLILLAIYFLCLITSFWNSKMRPKEIVLMLCQAFGIIYPSFHSFILIWGNKTLKQTFLSVLWQVTCWAKGQNQSTP.

Over 1–6 (MMSFLH) the chain is Extracellular. The chain crosses the membrane as a helical span at residues 7–27 (IVFSILVVVAFILGNFANGFI). Residues 28-46 (ALINFIAWVKRQKISSADQ) are Cytoplasmic-facing. Residues 47–67 (IIAALAVSRVGLLWVILLHWY) form a helical membrane-spanning segment. Over 68–79 (STVLNPTSSNLK) the chain is Extracellular. The chain crosses the membrane as a helical span at residues 80-100 (VIIFISNAWAVTNHFSIWLAT). Residues 101-125 (SLSIFYLLKIVNFSRLIFHHLKRKA) are Cytoplasmic-facing. Residues 126–146 (KSVVLVIVLGSLFFLVCXLVM) form a helical membrane-spanning segment. Topologically, residues 147-178 (KNTYINVWTEECEGNVTWKIKLRNAMHLSNLT) are extracellular. The helical transmembrane segment at 179-199 (VAMLANLIPFTLTLISFLLLI) threads the bilayer. At 200 to 229 (YSLCKHLKKMQLHGKGSQDPSTKIHIKALQ) the chain is on the cytoplasmic side. A helical membrane pass occupies residues 230–250 (TVTSFLILLAIYFLCLITSFW). The Extracellular portion of the chain corresponds to 251–259 (NSKMRPKEI). A helical transmembrane segment spans residues 260-280 (VLMLCQAFGIIYPSFHSFILI). At 281–309 (WGNKTLKQTFLSVLWQVTCWAKGQNQSTP) the chain is on the cytoplasmic side.

The protein belongs to the G-protein coupled receptor T2R family.

Its subcellular location is the membrane. Its function is as follows. Receptor that may play a role in the perception of bitterness and is gustducin-linked. May play a role in sensing the chemical composition of the gastrointestinal content. The activity of this receptor may stimulate alpha gustducin, mediate PLC-beta-2 activation and lead to the gating of TRPM5. This is Taste receptor type 2 member 20 (TAS2R20) from Pan troglodytes (Chimpanzee).